Consider the following 467-residue polypeptide: MLNKEVIVIGAGLAGCEAAWQIANSGVEVKLVEMRPIHSTPAHHTSEFGELVCSNSFGALSTDRAAGLLQEELRTFNSLIINTADEFSVPAGGALAVDRSKFSKSLTQTLSNHPLVEIKRFEQLDLPDKNRITVIATGPLTSNELANKLKNFTGLDSCHFFDAASPIIYGETINYDIAFRASRYDKGDPAYLNCPMNKIDYLNFRNALIEAEQATLKDFEKESANFFEACLPIEEMARRGVDTMRYGPLKSIGLWNPKWGDLFDRENRLKKRPHAIVQLRKEDLKGKLLNMVGFQTNLKWSEQKRIFRMIPGLEKAEFVRFGVMHRNTFLESPKLLLPTLQFLKRENLFAAGQITGTEGYAAAASGGLLAGLNASLLANNKSPVTFPDESMIGALMNFISNKNEIMSQQKKNKFQPMPASFGLVPELNNKIKDKKLRYKAYQKRSLEVLKEFKKVLDSSFEKDHILV.

10-15 (GAGLAG) contributes to the FAD binding site.

This sequence belongs to the MnmG family. TrmFO subfamily. Requires FAD as cofactor.

It localises to the cytoplasm. The enzyme catalyses uridine(54) in tRNA + (6R)-5,10-methylene-5,6,7,8-tetrahydrofolate + NADH + H(+) = 5-methyluridine(54) in tRNA + (6S)-5,6,7,8-tetrahydrofolate + NAD(+). It carries out the reaction uridine(54) in tRNA + (6R)-5,10-methylene-5,6,7,8-tetrahydrofolate + NADPH + H(+) = 5-methyluridine(54) in tRNA + (6S)-5,6,7,8-tetrahydrofolate + NADP(+). In terms of biological role, catalyzes the folate-dependent formation of 5-methyl-uridine at position 54 (M-5-U54) in all tRNAs. This Prochlorococcus marinus (strain MIT 9515) protein is Methylenetetrahydrofolate--tRNA-(uracil-5-)-methyltransferase TrmFO.